A 793-amino-acid polypeptide reads, in one-letter code: Phenylalanine--tRNA ligase beta subunit (793 aa).

One can recognise a tRNA-binding domain in the interval 40 to 159 (SKLNTKLVIG…MDEMVGREIS (120 aa)). Residues 401–476 (NYDNVYSITL…RLYGYDNIIE (76 aa)) form the B5 domain. 4 residues coordinate Mg(2+): D454, D460, E463, and E464. Positions 701-793 (SKFQKSTRDI…NLKELKVKVR (93 aa)) constitute an FDX-ACB domain.

The protein belongs to the phenylalanyl-tRNA synthetase beta subunit family. Type 1 subfamily. Tetramer of two alpha and two beta subunits. Mg(2+) serves as cofactor.

It is found in the cytoplasm. It carries out the reaction tRNA(Phe) + L-phenylalanine + ATP = L-phenylalanyl-tRNA(Phe) + AMP + diphosphate + H(+). This is Phenylalanine--tRNA ligase beta subunit from Mesoplasma florum (strain ATCC 33453 / NBRC 100688 / NCTC 11704 / L1) (Acholeplasma florum).